The following is a 346-amino-acid chain: 36.4 kDa proline-rich protein (346 aa).

The interval 11–144 (PYPPSTPKHP…PFTPKPPSPI (134 aa)) is disordered. Pro residues-rich tracts occupy residues 25 to 42 (KVKP…PSTP), 51 to 81 (VKPP…PSTP), and 89 to 144 (QKPC…PSPI).

The sequence is that of 36.4 kDa proline-rich protein (TPRP-F1) from Solanum lycopersicum (Tomato).